A 367-amino-acid chain; its full sequence is Ferredoxin--NADP reductase 2 (367 aa).

FAD-binding residues include aspartate 56, glutamine 64, tyrosine 69, valine 109, phenylalanine 144, aspartate 309, and threonine 350.

This sequence belongs to the ferredoxin--NADP reductase type 2 family. As to quaternary structure, homodimer. The cofactor is FAD.

The catalysed reaction is 2 reduced [2Fe-2S]-[ferredoxin] + NADP(+) + H(+) = 2 oxidized [2Fe-2S]-[ferredoxin] + NADPH. This chain is Ferredoxin--NADP reductase 2, found in Cupriavidus metallidurans (strain ATCC 43123 / DSM 2839 / NBRC 102507 / CH34) (Ralstonia metallidurans).